Here is a 283-residue protein sequence, read N- to C-terminus: 4-hydroxy-3-methylbut-2-enyl diphosphate reductase (283 aa).

Residue cysteine 12 participates in [4Fe-4S] cluster binding. 2 residues coordinate (2E)-4-hydroxy-3-methylbut-2-enyl diphosphate: histidine 40 and histidine 72. Dimethylallyl diphosphate-binding residues include histidine 40 and histidine 72. Histidine 40 and histidine 72 together coordinate isopentenyl diphosphate. Cysteine 94 contacts [4Fe-4S] cluster. Histidine 122 serves as a coordination point for (2E)-4-hydroxy-3-methylbut-2-enyl diphosphate. Residue histidine 122 participates in dimethylallyl diphosphate binding. Histidine 122 provides a ligand contact to isopentenyl diphosphate. Residue glutamate 124 is the Proton donor of the active site. Threonine 160 contributes to the (2E)-4-hydroxy-3-methylbut-2-enyl diphosphate binding site. Cysteine 188 lines the [4Fe-4S] cluster pocket. (2E)-4-hydroxy-3-methylbut-2-enyl diphosphate is bound by residues serine 216, asparagine 218, and serine 259. Dimethylallyl diphosphate is bound by residues serine 216, asparagine 218, and serine 259. Serine 216, asparagine 218, and serine 259 together coordinate isopentenyl diphosphate.

Belongs to the IspH family. [4Fe-4S] cluster is required as a cofactor.

The enzyme catalyses isopentenyl diphosphate + 2 oxidized [2Fe-2S]-[ferredoxin] + H2O = (2E)-4-hydroxy-3-methylbut-2-enyl diphosphate + 2 reduced [2Fe-2S]-[ferredoxin] + 2 H(+). It carries out the reaction dimethylallyl diphosphate + 2 oxidized [2Fe-2S]-[ferredoxin] + H2O = (2E)-4-hydroxy-3-methylbut-2-enyl diphosphate + 2 reduced [2Fe-2S]-[ferredoxin] + 2 H(+). It functions in the pathway isoprenoid biosynthesis; dimethylallyl diphosphate biosynthesis; dimethylallyl diphosphate from (2E)-4-hydroxy-3-methylbutenyl diphosphate: step 1/1. It participates in isoprenoid biosynthesis; isopentenyl diphosphate biosynthesis via DXP pathway; isopentenyl diphosphate from 1-deoxy-D-xylulose 5-phosphate: step 6/6. Its function is as follows. Catalyzes the conversion of 1-hydroxy-2-methyl-2-(E)-butenyl 4-diphosphate (HMBPP) into a mixture of isopentenyl diphosphate (IPP) and dimethylallyl diphosphate (DMAPP). Acts in the terminal step of the DOXP/MEP pathway for isoprenoid precursor biosynthesis. This is 4-hydroxy-3-methylbut-2-enyl diphosphate reductase from Dictyoglomus turgidum (strain DSM 6724 / Z-1310).